A 403-amino-acid polypeptide reads, in one-letter code: Dynactin subunit 2-B (403 aa).

The tract at residues 1–26 (MADPKYADLPGIARNEPDLYETSDLP) is disordered. Positions 99–132 (PQQKYQRLLHEVQELTQEVEKTQSTLKESATEEK) form a coiled coil. The interval 183-206 (AAKTRKDPEGKSSAKGPGPDNENL) is disordered. A compositionally biased stretch (basic and acidic residues) spans 184–194 (AKTRKDPEGKS). Positions 381 to 401 (KENLATVEDNFSSIDGRIKKL) form a coiled coil.

This sequence belongs to the dynactin subunit 2 family. As to quaternary structure, subunit of dynactin, a multiprotein complex part of a tripartite complex with dynein and a adapter, such as BICDL1, BICD2 or HOOK3. The dynactin complex is built around ACTR1A/ACTB filament and consists of an actin-related filament composed of a shoulder domain, a pointed end and a barbed end. Its length is defined by its flexible shoulder domain. The soulder is composed of 2 DCTN1 subunits, 4 DCTN2 and 2 DCTN3.

The protein localises to the cytoplasm. It is found in the cytoskeleton. Its subcellular location is the microtubule organizing center. The protein resides in the centrosome. It localises to the membrane. Its function is as follows. Part of the dynactin complex that activates the molecular motor dynein for ultra-processive transport along microtubules. In the dynactin soulder domain, binds the ACTR1A filament and acts as a molecular ruler to determine the length. Modulates cytoplasmic dynein binding to an organelle, and plays a role in prometaphase chromosome alignment and spindle organization during mitosis. Involved in anchoring microtubules to centrosomes. The protein is Dynactin subunit 2-B (dctn2-b) of Xenopus laevis (African clawed frog).